A 229-amino-acid polypeptide reads, in one-letter code: Potassium/proton antiporter CemA (229 aa).

Transmembrane regions (helical) follow at residues 7 to 27 (LTPFPYLASIVFLPWWISLSF), 106 to 126 (IVLHFSTNIICFAILSGYYFL), and 189 to 209 (IISGLVSTFPVILDTILKYWI).

Belongs to the CemA family.

The protein localises to the plastid. Its subcellular location is the chloroplast inner membrane. The catalysed reaction is K(+)(in) + H(+)(out) = K(+)(out) + H(+)(in). Its function is as follows. Contributes to K(+)/H(+) antiport activity by supporting proton efflux to control proton extrusion and homeostasis in chloroplasts in a light-dependent manner to modulate photosynthesis. Prevents excessive induction of non-photochemical quenching (NPQ) under continuous-light conditions. Indirectly promotes efficient inorganic carbon uptake into chloroplasts. The chain is Potassium/proton antiporter CemA from Calycanthus floridus var. glaucus (Eastern sweetshrub).